A 451-amino-acid polypeptide reads, in one-letter code: tRNA modification GTPase MnmE (451 aa).

(6S)-5-formyl-5,6,7,8-tetrahydrofolate contacts are provided by R28, E85, and K124. A TrmE-type G domain is found at 220–373; it reads GLYTVLVGPP…LKTRLRTLLL (154 aa). K(+) is bound at residue N230. Residues 230–235, 249–255, and 274–277 each bind GTP; these read NVGKSS, TDVPGTT, and DTAG. S234 lines the Mg(2+) pocket. 3 residues coordinate K(+): T249, V251, and T254. T255 lines the Mg(2+) pocket. K451 is a binding site for (6S)-5-formyl-5,6,7,8-tetrahydrofolate.

Belongs to the TRAFAC class TrmE-Era-EngA-EngB-Septin-like GTPase superfamily. TrmE GTPase family. Homodimer. Heterotetramer of two MnmE and two MnmG subunits. The cofactor is K(+).

It localises to the cytoplasm. Functionally, exhibits a very high intrinsic GTPase hydrolysis rate. Involved in the addition of a carboxymethylaminomethyl (cmnm) group at the wobble position (U34) of certain tRNAs, forming tRNA-cmnm(5)s(2)U34. This is tRNA modification GTPase MnmE from Xylella fastidiosa (strain Temecula1 / ATCC 700964).